Reading from the N-terminus, the 162-residue chain is Austinoid biosynthesis clusters protein J (162 aa).

Belongs to the trt14 isomerase family. As to quaternary structure, homodimer.

Its pathway is secondary metabolite biosynthesis; terpenoid biosynthesis. Part of the gene cluster B that mediates the biosynthesis of austinol and dehydroaustinol, two fungal meroterpenoids. The first step of the pathway is the synthesis of 3,5-dimethylorsellinic acid by the polyketide synthase ausA. 3,5-dimethylorsellinic acid is then prenylated by the polyprenyl transferase ausN. Further epoxidation by the FAD-dependent monooxygenase ausM and cyclization by the probable terpene cyclase ausL lead to the formation of protoaustinoid A. Protoaustinoid A is then oxidized to spiro-lactone preaustinoid A3 by the combined action of the FAD-binding monooxygenases ausB and ausC, and the dioxygenase ausE. Acid-catalyzed keto-rearrangement and ring contraction of the tetraketide portion of preaustinoid A3 by ausJ lead to the formation of preaustinoid A4. The aldo-keto reductase ausK, with the help of ausH, is involved in the next step by transforming preaustinoid A4 into isoaustinone which is in turn hydroxylated by the P450 monooxygenase ausI to form austinolide. Finally, the cytochrome P450 monooxygenase ausG modifies austinolide to austinol. Austinol can be further modified to dehydroaustinol which forms a diffusible complex with diorcinol that initiates conidiation. Due to genetic rearrangements of the clusters and the subsequent loss of some enzymes, the end products of the Emericella nidulans austinoid biosynthesis clusters are austinol and dehydroaustinol, even if additional enzymes, such as the O-acetyltransferase ausQ and the cytochrome P450 monooxygenase ausR are still functional. The sequence is that of Austinoid biosynthesis clusters protein J from Emericella nidulans (strain FGSC A4 / ATCC 38163 / CBS 112.46 / NRRL 194 / M139) (Aspergillus nidulans).